A 245-amino-acid polypeptide reads, in one-letter code: Eukaryotic translation initiation factor 4E type 2 (245 aa).

A compositionally biased stretch (basic and acidic residues) spans 1-38 (MNNKFDALKDDDSGDHDQNEENSTQKDGEKEKTDRDKS). Residues 1-52 (MNNKFDALKDDDSGDHDQNEENSTQKDGEKEKTDRDKSQSSGKRKAVVPGPA) form a disordered region. Position 13 is a phosphoserine (serine 13). Residues 54-57 (HPLQ) are EIF4EBP1/2/3 binding. An mRNA-binding site is contributed by 78 to 79 (YE). The tract at residues 95-99 (WKFYS) is EIF4EBP1/2/3 binding. MRNA contacts are provided by residues histidine 110 and 124–125 (WE). The residue at position 134 (lysine 134) is an N6-acetyllysine; alternate. A Glycyl lysine isopeptide (Lys-Gly) (interchain with G-Cter in ISG15); alternate cross-link involves residue lysine 134. Residues 150 to 157 (NLILAMLG) form an EIF4EBP1/2/3 binding region. MRNA contacts are provided by residues 174–179 (RFQEDI) and 222–224 (KMP). Lysine 222 participates in a covalent cross-link: Glycyl lysine isopeptide (Lys-Gly) (interchain with G-Cter in ISG15).

The protein belongs to the eukaryotic initiation factor 4E family. Interacts with EIF4EBP1, EIF4EBP2 and EIF4EBP3. Does not interact with eIF4G (EIF4G1, EIF4G2 or EIF4G3). Component of the 4EHP-GYF2 complex, at least composed of EIF4E2, GIGYF2 and ZNF598. Interacts with GIGYF2 (via the 4EHP-binding motif); the interaction is direct. Interacts with EIF4ENIF1/4E-T (via YXXXXLphi motif); increasing affinity for the 7-methylguanosine-containing mRNA cap. In terms of processing, ubiquitinated by ARIH1. The consequences of ubiquitination are however unclear: according to a report, EIF4E2 ubiquitination leads to promote EIF4E2 cap-binding and protein translation arrest. According to another report ubiquitination leads to its subsequent degradation. ISGylation enhances its cap structure-binding activity and translation-inhibition activity. Widely expressed with highest levels in testis, kidney and liver.

It is found in the cytoplasm. It localises to the P-body. Its function is as follows. Recognizes and binds the 7-methylguanosine-containing mRNA cap during an early step in the initiation. Acts as a repressor of translation initiation. In contrast to EIF4E, it is unable to bind eIF4G (EIF4G1, EIF4G2 or EIF4G3), suggesting that it acts by competing with EIF4E and block assembly of eIF4F at the cap. In P-bodies, component of a complex that promotes miRNA-mediated translational repression. Involved in virus-induced host response by mediating miRNA MIR34A-induced translational silencing which controls IFNB1 production by a negative feedback mechanism. Functionally, component of the 4EHP-GYF2 complex, a multiprotein complex that acts as a repressor of translation initiation. In association with GIGYF2, assists ribosome-associated quality control (RQC) by sequestering the mRNA cap, blocking ribosome initiation and decreasing the translational load on problematic messages. Part of a pathway that works in parallel to RQC-mediated degradation of the stalled nascent polypeptide. GIGYF2 and EIF4E2 work downstream and independently of ZNF598, which seems to work as a scaffold that can recruit them to faulty mRNA even if alternative recruitment mechanisms may exist. The protein is Eukaryotic translation initiation factor 4E type 2 of Mus musculus (Mouse).